We begin with the raw amino-acid sequence, 293 residues long: Eukaryotic translation initiation factor 3 subunit G (293 aa).

Disordered regions lie at residues 1–32 (MPSIEFDDSKPSWADQVEEEGDEGSLPSPKET) and 163–206 (STGE…QPNR). Residues 194–206 (GGTRRGESMQPNR) show a composition bias toward basic and acidic residues. An RRM domain is found at 212 to 290 (ATIRVTNLSE…LILNVEWAKP (79 aa)).

Belongs to the eIF-3 subunit G family. As to quaternary structure, component of the eukaryotic translation initiation factor 3 (eIF-3) complex, which is composed of 13 subunits: eif3a, eif3b, eif3c, eif3d, eif3e, eif3f, eif3g, eif3h, eif3i, eif3j, eif3k, eif3l and eif3m.

The protein resides in the cytoplasm. In terms of biological role, RNA-binding component of the eukaryotic translation initiation factor 3 (eIF-3) complex, which is involved in protein synthesis of a specialized repertoire of mRNAs and, together with other initiation factors, stimulates binding of mRNA and methionyl-tRNAi to the 40S ribosome. The eIF-3 complex specifically targets and initiates translation of a subset of mRNAs involved in cell proliferation. This subunit can bind 18S rRNA. The chain is Eukaryotic translation initiation factor 3 subunit G (eif3g) from Danio rerio (Zebrafish).